Consider the following 263-residue polypeptide: Probable elongation factor 1-beta/1-delta 2 (263 aa).

S2 bears the N-acetylserine mark. Positions 112-153 (QGQTSSVAAPAAAPAAAKEEAAGDDDFDLFGSEDEEEDEEKK) are disordered. Positions 133–150 (AGDDDFDLFGSEDEEEDE) are enriched in acidic residues.

The protein belongs to the EF-1-beta/EF-1-delta family. In terms of assembly, EF-1 is composed of 4 subunits: alpha, beta, delta, and gamma.

In terms of biological role, EF-1-beta and EF-1-delta stimulate the exchange of GDP bound to EF-1-alpha to GTP. The chain is Probable elongation factor 1-beta/1-delta 2 from Caenorhabditis elegans.